The chain runs to 144 residues: Deoxyuridine 5'-triphosphate nucleotidohydrolase (144 aa).

Residues Arg-63–Gly-65, Asn-76, and Thr-80–Asp-82 each bind substrate.

It belongs to the dUTPase family. Mg(2+) serves as cofactor.

The catalysed reaction is dUTP + H2O = dUMP + diphosphate + H(+). It participates in pyrimidine metabolism; dUMP biosynthesis; dUMP from dCTP (dUTP route): step 2/2. This enzyme is involved in nucleotide metabolism: it produces dUMP, the immediate precursor of thymidine nucleotides and it decreases the intracellular concentration of dUTP so that uracil cannot be incorporated into DNA. This Porphyromonas gingivalis (strain ATCC BAA-308 / W83) protein is Deoxyuridine 5'-triphosphate nucleotidohydrolase.